A 445-amino-acid polypeptide reads, in one-letter code: Exodeoxyribonuclease 7 large subunit (445 aa).

It belongs to the XseA family. Heterooligomer composed of large and small subunits.

It is found in the cytoplasm. It carries out the reaction Exonucleolytic cleavage in either 5'- to 3'- or 3'- to 5'-direction to yield nucleoside 5'-phosphates.. In terms of biological role, bidirectionally degrades single-stranded DNA into large acid-insoluble oligonucleotides, which are then degraded further into small acid-soluble oligonucleotides. The sequence is that of Exodeoxyribonuclease 7 large subunit from Xanthomonas euvesicatoria pv. vesicatoria (strain 85-10) (Xanthomonas campestris pv. vesicatoria).